Here is a 555-residue protein sequence, read N- to C-terminus: CTP synthase (555 aa).

The amidoligase domain stretch occupies residues 1–265 (MTRYIFITGG…GNRVCEKLNI (265 aa)). Ser-13 serves as a coordination point for CTP. Position 13 (Ser-13) interacts with UTP. ATP is bound by residues 14–19 (SLGKGI) and Asp-71. Mg(2+) contacts are provided by Asp-71 and Glu-139. CTP contacts are provided by residues 146–148 (DIE), 186–191 (KTKPTQ), and Lys-222. Residues 186 to 191 (KTKPTQ) and Lys-222 each bind UTP. Residues 290 to 541 (TVAVVGKYVD…IKAGLAAKEA (252 aa)) enclose the Glutamine amidotransferase type-1 domain. Gly-351 is a binding site for L-glutamine. The Nucleophile; for glutamine hydrolysis role is filled by Cys-378. L-glutamine is bound by residues 379 to 382 (LGMQ), Glu-402, and Arg-469. Residues His-514 and Glu-516 contribute to the active site.

Belongs to the CTP synthase family. As to quaternary structure, homotetramer.

It carries out the reaction UTP + L-glutamine + ATP + H2O = CTP + L-glutamate + ADP + phosphate + 2 H(+). The enzyme catalyses L-glutamine + H2O = L-glutamate + NH4(+). The catalysed reaction is UTP + NH4(+) + ATP = CTP + ADP + phosphate + 2 H(+). It functions in the pathway pyrimidine metabolism; CTP biosynthesis via de novo pathway; CTP from UDP: step 2/2. With respect to regulation, allosterically activated by GTP, when glutamine is the substrate; GTP has no effect on the reaction when ammonia is the substrate. The allosteric effector GTP functions by stabilizing the protein conformation that binds the tetrahedral intermediate(s) formed during glutamine hydrolysis. Inhibited by the product CTP, via allosteric rather than competitive inhibition. Functionally, catalyzes the ATP-dependent amination of UTP to CTP with either L-glutamine or ammonia as the source of nitrogen. Regulates intracellular CTP levels through interactions with the four ribonucleotide triphosphates. This chain is CTP synthase, found in Coxiella burnetii (strain Dugway 5J108-111).